The following is a 312-amino-acid chain: DNA-directed RNA polymerase subunit alpha (312 aa).

An alpha N-terminal domain (alpha-NTD) region spans residues 1 to 229; it reads MLQYQIDRID…ELFQPLATVT (229 aa). An alpha C-terminal domain (alpha-CTD) region spans residues 241 to 312; it reads SPEAQIPLEE…ISIPQSRTSV (72 aa).

This sequence belongs to the RNA polymerase alpha chain family. As to quaternary structure, in cyanobacteria the RNAP catalytic core is composed of 2 alpha, 1 beta, 1 beta', 1 gamma and 1 omega subunit. When a sigma factor is associated with the core the holoenzyme is formed, which can initiate transcription.

It catalyses the reaction RNA(n) + a ribonucleoside 5'-triphosphate = RNA(n+1) + diphosphate. DNA-dependent RNA polymerase catalyzes the transcription of DNA into RNA using the four ribonucleoside triphosphates as substrates. The sequence is that of DNA-directed RNA polymerase subunit alpha from Prochlorococcus marinus (strain MIT 9215).